A 303-amino-acid polypeptide reads, in one-letter code: MDSSGTVRNQTSDDHSRPADAAGTAATLYGAPAETRSPRRSRFTVRDVAAAKSRGERWSMLTAYDFTTATVFDEAEIPVLLVGDSAANVVYGYDTTVPVTVDELIPLVRAVVRGAPHAMVVADLPFGSYQAGPEQALATATRFLKEGGAQAVKLEGGARVAPAVAALVGAGIPVIGHLGLTPQSIHALGGYRVQGRDEAGEVLLADALAIEAAGAFAVVLEVVPADLAARVTKELHIATVGIGAGADCDAQVLVWQDMAGLSGGHVPRFVKRYADLRTVLGDAVRTYRDEVRGGQYPTVEHSY.

The span at 1–10 shows a compositional bias: polar residues; that stretch reads MDSSGTVRNQ. Residues 1-41 form a disordered region; it reads MDSSGTVRNQTSDDHSRPADAAGTAATLYGAPAETRSPRRS. Mg(2+) is bound by residues Asp-84 and Asp-123. 3-methyl-2-oxobutanoate-binding positions include 84-85, Asp-123, and Lys-153; that span reads DS. Mg(2+) is bound at residue Glu-155. Residue Glu-221 is the Proton acceptor of the active site.

It belongs to the PanB family. In terms of assembly, homodecamer; pentamer of dimers. The cofactor is Mg(2+).

The protein localises to the cytoplasm. It carries out the reaction 3-methyl-2-oxobutanoate + (6R)-5,10-methylene-5,6,7,8-tetrahydrofolate + H2O = 2-dehydropantoate + (6S)-5,6,7,8-tetrahydrofolate. It functions in the pathway cofactor biosynthesis; (R)-pantothenate biosynthesis; (R)-pantoate from 3-methyl-2-oxobutanoate: step 1/2. Functionally, catalyzes the reversible reaction in which hydroxymethyl group from 5,10-methylenetetrahydrofolate is transferred onto alpha-ketoisovalerate to form ketopantoate. The protein is 3-methyl-2-oxobutanoate hydroxymethyltransferase of Frankia alni (strain DSM 45986 / CECT 9034 / ACN14a).